A 156-amino-acid polypeptide reads, in one-letter code: Arginine repressor (156 aa).

This sequence belongs to the ArgR family.

It localises to the cytoplasm. It participates in amino-acid biosynthesis; L-arginine biosynthesis [regulation]. In terms of biological role, regulates arginine biosynthesis genes. The protein is Arginine repressor of Cronobacter sakazakii (strain ATCC BAA-894) (Enterobacter sakazakii).